The sequence spans 653 residues: MAKRKEVILQETLNTQEAWEVAMNSGKLYVVDAHQKWCGPCTAIVGMLKRIKNELGDDLLRFATAQVDVIDTLEQYRGKCEPNFLFYGGGELVAAVRGCNAPLVQETIQETLKNEHKILSGEMERKVFRDVYSDTPDQEEEEEDEEEEEGGVVSKQITVALIKPDVVQNGQVDEILQKISEAGIEVLADEERMLTVEEARDFYKNKEEEEYFDQLIDYVTSGPCRVLVLTKGESGEGVVTLWRDIIGPFDAAVAKEENPDSLRAIYGTDATSNALHGSSSTEEAVRELGFFFPDFKPPTYRSAKSAASRASGRRSKTPSQKPRLQRTLAIIRPDALQAHKDSILQKIDEAGFKIAMQKEMVLTREQAESFYSEHKDTDYFEPLVKQMTCGPVLALCLAHDDAVDHWRSMLGPKVVADAVEEQPDSLRAQFRVEEAEVNMLHGSDSAEAAEEELSKIFHVEQTLAVIKPDAIDEKEQIMGKLKEAGFMISCQKDMNLSKEIASEIYKSKEGSEYYDHLIDHMTSGPTLMMVLSAENAVEKLRDIMGPTDPEVAKESHPESLRAMFAKSILENAIHSPSTNESAQEKIRIVFGDAQFDWDVNDMQAEEGEVNETSGEQPTDEQSGETEKTEEDGEHEGAQSDQQQAVSEAMEKEE.

A Thioredoxin domain is found at 9–114; sequence LQETLNTQEA…QETIQETLKN (106 aa). A disulfide bridge connects residues cysteine 38 and cysteine 41. Positions 155–299 are NDK 1; sequence KQITVALIKP…FFFPDFKPPT (145 aa). Residues 300–323 form a disordered region; it reads YRSAKSAASRASGRRSKTPSQKPR. Residues 301-310 show a composition bias toward low complexity; sequence RSAKSAASRA. NDK regions lie at residues 324 to 459 and 459 to 597; these read LQRT…IFHV and VEQT…QFDW. The disordered stretch occupies residues 603 to 653; that stretch reads QAEEGEVNETSGEQPTDEQSGETEKTEEDGEHEGAQSDQQQAVSEAMEKEE. The segment covering 617-633 has biased composition (acidic residues); sequence PTDEQSGETEKTEEDGE.

It in the C-terminal section; belongs to the NDK family. As to expression, testis-specific.

Functionally, may be required during the final stages of sperm tail maturation. May act by reducing disulfide bonds within the sperm components. In Ciona intestinalis (Transparent sea squirt), this protein is Thioredoxin domain-containing protein 3 homolog (CiIC3).